We begin with the raw amino-acid sequence, 733 residues long: Zinc finger protein indra (733 aa).

Residues 17–91 (VRCDHCGTSQ…RETVDRVQEQ (75 aa)) enclose the ZAD domain. Zn(2+) is bound by residues C19, C22, C64, and C67. Basic and acidic residues predominate over residues 90–100 (EQPAKKTKVAE). Residues 90–121 (EQPAKKTKVAEIEEPSTQESDKKAVKVPKKNT) are disordered. Phosphoserine is present on residues S109, S153, and S176. Residues T180 and T188 each carry the phosphothreonine modification. 2 C2H2-type zinc fingers span residues 228–251 (FQCPECEFHAKFPKPYKEHLQKEH) and 259–282 (YPCTLCIKTFGVLKTLKNHLRDTH). Basic and acidic residues predominate over residues 285–316 (TFESEAKTKAKESKEKEAKSGAKNKIDAKAKE). Positions 285–336 (TFESEAKTKAKESKEKEAKSGAKNKIDAKAKETNAVSQRKKPKEKKSKEKKT) are disordered. 2 consecutive C2H2-type zinc fingers follow at residues 416-439 (FQCEICDCELMTAKQMQEHMKTVH) and 447-469 (FKCHVCEKSLATKQSLKTHMTLH). Disordered stretches follow at residues 499-525 (IENTAEKVEGPKKSQQSPTKAAKFTNR) and 540-622 (AFKT…SSDV). Residues 592–602 (SVSTTNGNSPA) show a composition bias toward polar residues. Phosphoserine is present on residues S600, S642, and S646. T647 is subject to Phosphothreonine. 2 consecutive C2H2-type zinc fingers follow at residues 653–676 (LSCDRCGKFVKSRQRLDSHMEKKH) and 708–733 (LPCGVANCKKVFTEANFLSSHLRKRH). Phosphoserine is present on S654.

It belongs to the krueppel C2H2-type zinc-finger protein family.

It is found in the nucleus. Its subcellular location is the nucleolus. Its function is as follows. Required for rDNA copy number maintenance and non-random sister chromatid segregation (NRSS) following unequal sister chromatid exchange. Binds ribosomal DNA (rDNA) preferentially binding to intergenic spacers (IGS) regions on both X and Y chromosomes. Essential for NRSS, a mechanism which contributes to the recovery and maintenance of inherently unstable rDNA copy numbers so that the integrity of the germline genome is upheld over generations and germline immortality is sustained. May be involved in transcriptional regulation. The sequence is that of Zinc finger protein indra from Drosophila melanogaster (Fruit fly).